A 370-amino-acid polypeptide reads, in one-letter code: GTPase Obg (370 aa).

The Obg domain maps to Met-1–Leu-159. The interval Asn-127–Pro-146 is disordered. In terms of domain architecture, OBG-type G spans Ala-160–Ala-334. Residues Gly-166–Ser-173, Phe-191–Ala-195, Asp-213–Gly-216, Asn-284–Asp-287, and Ser-315–Leu-317 each bind GTP. The Mg(2+) site is built by Ser-173 and Thr-193.

The protein belongs to the TRAFAC class OBG-HflX-like GTPase superfamily. OBG GTPase family. As to quaternary structure, monomer. Requires Mg(2+) as cofactor.

It is found in the cytoplasm. Functionally, an essential GTPase which binds GTP, GDP and possibly (p)ppGpp with moderate affinity, with high nucleotide exchange rates and a fairly low GTP hydrolysis rate. Plays a role in control of the cell cycle, stress response, ribosome biogenesis and in those bacteria that undergo differentiation, in morphogenesis control. In Burkholderia lata (strain ATCC 17760 / DSM 23089 / LMG 22485 / NCIMB 9086 / R18194 / 383), this protein is GTPase Obg.